Reading from the N-terminus, the 1374-residue chain is Major capsid protein (1374 aa).

Belongs to the herpesviridae major capsid protein family. As to quaternary structure, homomultimer. Makes the hexons and eleven out of twelve pentons. Interacts with triplex proteins 1/TRX1 and 2/TRX2; adjacent capsomers are linked together in groups of three by triplexes, heterotrimeric complexes composed of one molecule of TRX1 and two molecules of TRX2. Interacts with scaffold protein; this interaction allows efficient MCP transport to the host nucleus. Interacts with capsid vertex component 2/CVC2. Interacts with the small capsomere-interacting protein/SCP.

It is found in the virion. The protein resides in the host nucleus. Its function is as follows. Self-assembles to form an icosahedral capsid with a T=16 symmetry, about 200 nm in diameter, and consisting of 150 hexons and 12 pentons (total of 162 capsomers). Hexons form the edges and faces of the capsid and are each composed of six MCP molecules. In contrast, one penton is found at each of the 12 vertices. Eleven of the pentons are MCP pentamers, while the last vertex is occupied by the portal complex. The capsid is surrounded by a layer of proteinaceous material designated the tegument which, in turn, is enclosed in an envelope of host cell-derived lipids containing virus-encoded glycoproteins. The polypeptide is Major capsid protein (Homo sapiens (Human)).